A 498-amino-acid polypeptide reads, in one-letter code: Glycerol kinase (498 aa).

Thr12 contributes to the ADP binding site. ATP is bound by residues Thr12, Thr13, and Ser14. Thr12 lines the sn-glycerol 3-phosphate pocket. Residue Arg16 participates in ADP binding. Arg82, Glu83, Tyr134, and Asp244 together coordinate sn-glycerol 3-phosphate. Glycerol is bound by residues Arg82, Glu83, Tyr134, Asp244, and Gln245. Residues Thr266 and Gly310 each coordinate ADP. Thr266, Gly310, Gln314, and Gly411 together coordinate ATP. ADP is bound by residues Gly411 and Asn415.

The protein belongs to the FGGY kinase family.

The enzyme catalyses glycerol + ATP = sn-glycerol 3-phosphate + ADP + H(+). Its pathway is polyol metabolism; glycerol degradation via glycerol kinase pathway; sn-glycerol 3-phosphate from glycerol: step 1/1. Inhibited by fructose 1,6-bisphosphate (FBP). In terms of biological role, key enzyme in the regulation of glycerol uptake and metabolism. Catalyzes the phosphorylation of glycerol to yield sn-glycerol 3-phosphate. The protein is Glycerol kinase of Chloroflexus aurantiacus (strain ATCC 29366 / DSM 635 / J-10-fl).